The sequence spans 123 residues: Large ribosomal subunit protein uL22c (123 aa).

Belongs to the universal ribosomal protein uL22 family. Part of the 50S ribosomal subunit.

The protein localises to the plastid. The protein resides in the chloroplast. In terms of biological role, this protein binds specifically to 23S rRNA. Functionally, the globular domain of the protein is located near the polypeptide exit tunnel on the outside of the subunit, while an extended beta-hairpin is found that lines the wall of the exit tunnel in the center of the 70S ribosome. This is Large ribosomal subunit protein uL22c (rpl22) from Chara vulgaris (Common stonewort).